We begin with the raw amino-acid sequence, 438 residues long: Neutral metalloprotease ShpI (438 aa).

The N-terminal stretch at 1–26 (MINKKKLVTSLVTSSLLATFTLGSFA) is a signal peptide. The propeptide occupies 27 to 101 (DAHTYIINNE…KSENALSNSK (75 aa)). Residue His242 coordinates Zn(2+). Glu243 is a catalytic residue. The Zn(2+) site is built by His246 and Glu269.

It belongs to the peptidase M30 family. The cofactor is Zn(2+). Post-translationally, several different N-terminal ends may be produced, the favored N-terminus is position 102.

It localises to the secreted. Inhibited by metal- and zinc-specific inhibitors, such as EDTA and 1,10-phenanthroline in vitro. Is resistant to all inhibitors of serine, cysteine and aspartic proteases. Its function is as follows. Protease that has a low substrate specificity. Catalyzes the hydrolysis of glucagon, melittin and oxidized beta-insulin at various positions in vitro. Is not able to cleave elastin or the synthetic substrates FAGLA (a substrate for neutral proteinases) and FALGPA (a substrate for collagenase). This chain is Neutral metalloprotease ShpI, found in Staphylococcus hyicus.